Here is a 302-residue protein sequence, read N- to C-terminus: Homoserine O-acetyltransferase (302 aa).

Residue cysteine 142 is the Acyl-thioester intermediate of the active site. 2 residues coordinate substrate: lysine 163 and serine 192. The active-site Proton acceptor is histidine 235. The active site involves glutamate 237. Arginine 249 serves as a coordination point for substrate.

It belongs to the MetA family.

Its subcellular location is the cytoplasm. The enzyme catalyses L-homoserine + acetyl-CoA = O-acetyl-L-homoserine + CoA. It participates in amino-acid biosynthesis; L-methionine biosynthesis via de novo pathway; O-acetyl-L-homoserine from L-homoserine: step 1/1. Its function is as follows. Transfers an acetyl group from acetyl-CoA to L-homoserine, forming acetyl-L-homoserine. The polypeptide is Homoserine O-acetyltransferase (Clostridium novyi (strain NT)).